Reading from the N-terminus, the 93-residue chain is Integration host factor subunit beta (93 aa).

It belongs to the bacterial histone-like protein family. In terms of assembly, heterodimer of an alpha and a beta chain.

Its function is as follows. This protein is one of the two subunits of integration host factor, a specific DNA-binding protein that functions in genetic recombination as well as in transcriptional and translational control. In Aliivibrio fischeri (strain ATCC 700601 / ES114) (Vibrio fischeri), this protein is Integration host factor subunit beta.